Consider the following 149-residue polypeptide: D-aminoacyl-tRNA deacylase (149 aa).

Residues 137–138 carry the Gly-cisPro motif, important for rejection of L-amino acids motif; sequence GP.

The protein belongs to the DTD family. In terms of assembly, homodimer.

It localises to the cytoplasm. The catalysed reaction is glycyl-tRNA(Ala) + H2O = tRNA(Ala) + glycine + H(+). The enzyme catalyses a D-aminoacyl-tRNA + H2O = a tRNA + a D-alpha-amino acid + H(+). An aminoacyl-tRNA editing enzyme that deacylates mischarged D-aminoacyl-tRNAs. Also deacylates mischarged glycyl-tRNA(Ala), protecting cells against glycine mischarging by AlaRS. Acts via tRNA-based rather than protein-based catalysis; rejects L-amino acids rather than detecting D-amino acids in the active site. By recycling D-aminoacyl-tRNA to D-amino acids and free tRNA molecules, this enzyme counteracts the toxicity associated with the formation of D-aminoacyl-tRNA entities in vivo and helps enforce protein L-homochirality. The chain is D-aminoacyl-tRNA deacylase from Caldicellulosiruptor saccharolyticus (strain ATCC 43494 / DSM 8903 / Tp8T 6331).